A 614-amino-acid chain; its full sequence is Zinc metalloproteinase-disintegrin-like protein H4 subunit A (614 aa).

Positions 1-20 (MIQPLLVVTCLVVFPYQVSS) are cleaved as a signal peptide. The propeptide occupies 21-193 (IILESGNVND…RKASQLVATS (173 aa)). Residue Glu194 is modified to Pyrrolidone carboxylic acid (Glu). The Peptidase M12B domain maps to 201-397 (KYIELVIVVD…IKSKCIDNKP (197 aa)). Asn220 is a glycosylation site (N-linked (GlcNAc...) asparagine). 17 cysteine pairs are disulfide-bonded: Cys312–Cys392, Cys352–Cys376, Cys354–Cys359, Cys408–Cys437, Cys419–Cys432, Cys421–Cys427, Cys431–Cys454, Cys445–Cys451, Cys450–Cys476, Cys463–Cys483, Cys470–Cys502, Cys495–Cys507, Cys514–Cys564, Cys529–Cys575, Cys542–Cys552, Cys559–Cys601, and Cys595–Cys607. His337 contributes to the Zn(2+) binding site. The Metal-binding signature appears at 337–348 (HELGHNLGMDHD). Glu338 serves as the catalytic Proton acceptor. Zn(2+)-binding residues include His341 and His347. Positions 405 to 491 (PAFCGNYFVE…ECPTDVLQRN (87 aa)) constitute a Disintegrin domain. Positions 410, 412, 414, 417, and 420 each coordinate Ca(2+). Asn433 carries an N-linked (GlcNAc...) asparagine glycan. The short motif at 469–471 (ECD) is the D/ECD-tripeptide element. Residues Asp471 and Asp486 each coordinate Ca(2+).

Belongs to the venom metalloproteinase (M12B) family. P-III subfamily. Homodimer; disulfide-linked. Heterodimer of A and B subunits; disulfide-linked. Zn(2+) serves as cofactor. In terms of processing, N-glycosylated. Post-translationally, the N-terminus is blocked. As to expression, expressed by the venom gland (at protein level). Expressed by the venom gland.

The protein localises to the secreted. Its activity is regulated as follows. The proteolytic activity of the heterodimer of A and B subunits requires Zn(2+) and Ca(2+) ions. Its function is as follows. Heterodimer (A and B subunits): Zinc metalloprotease that has fibrinogenolytic and hemorrhagic activities. Cleaves insulin B chain preferably at '40-Tyr-|-Leu-41' bond, but also at '28-Gln-|-His-29' and '34-His-|-Leu-35' bonds. Hydrolyzes effectively isolated extracellular matrix (ECM) bovine fibronectin, and only slightly, basal membrane (BM) proteins human collagen IV and murine laminin, in vitro. Cleaves nidogen-1 (at '350-Ser-|-Phe-351' and '380-Tyr-|-Asn-381' bonds), but not laminin, in a solubilized BM preparation. Hydrolyzes plasma proteins involved in blood coagulation in vitro. It slightly shortens prothrombin time and significantly prolongs thrombin time. Has potent alpha-fibrinogenase activity cleaving human fibrinogen alpha chain at '441-Glu-|-Leu-442' and '539-Glu-|-Phe-540' bonds, and to a lesser extent, beta chain at '52-Lys-|-Arg-53' and '48-Pro-|-Leu-49' bonds, but does not cleave gamma chain. Hydrolyzes bovine prothrombin at '200-Ser-|-Gly-201' bond, but does not activate it, however, it cleaves fragment 1 and prethrombin 1 from it. Hydrolyzes bovine factor X heavy chain, but the cleavage does not produce an activated factor Xa heavy chain. No hydrolysis or activation of plasminogen. The ability to degrade some of the ECM, BM and plasma proteins is likely the main contributor to its hemorrhagic activity. Inhibits platelet aggregation induced by collagen in vitro. Its binding to glycosaminoglycans (GAGs) may assist in concentrating it in the proximity of blood vessel walls enabling in vivo degradation of BM protein components. Cytotoxic to cultured HeLa cancer cells in a concentration- and time-dependent manner. In the solubilized BM preparation (Matrigel), it induces morphological changes in the HeLa cells and inhibits their adhesion, however, the viability of the cells is not reduced. The polypeptide is Zinc metalloproteinase-disintegrin-like protein H4 subunit A (Vipera ammodytes ammodytes (Western sand viper)).